Consider the following 436-residue polypeptide: F-box protein SKIP16 (436 aa).

An F-box; degenerate domain is found at 75-111 (RESFRMYPWNLVKRVRLCWDNLKQWLTLNFPEAKATL). The ApaG domain occupies 295–436 (VSVTNGVQVR…FPLELPDYIF (142 aa)).

In terms of assembly, part of a SCF (ASK-cullin-F-box) protein ligase complex. Interacts with SKP1A/ASK1, SKP1B/ASK2, ASK4, ASK11 and ASK13.

It participates in protein modification; protein ubiquitination. Component of SCF(ASK-cullin-F-box) E3 ubiquitin ligase complexes, which may mediate the ubiquitination and subsequent proteasomal degradation of target proteins. This chain is F-box protein SKIP16 (SKIP16), found in Arabidopsis thaliana (Mouse-ear cress).